The chain runs to 56 residues: Large ribosomal subunit protein bL33 (56 aa).

Residues 1 to 12 (MATKGGRDKIKL) show a composition bias toward basic and acidic residues. The segment at 1–24 (MATKGGRDKIKLESTAGTGHFYTT) is disordered. Polar residues predominate over residues 15 to 24 (TAGTGHFYTT).

This sequence belongs to the bacterial ribosomal protein bL33 family.

The polypeptide is Large ribosomal subunit protein bL33 (Paracidovorax citrulli (strain AAC00-1) (Acidovorax citrulli)).